The chain runs to 114 residues: Nucleoid-associated protein NT01CX_0824 (114 aa).

The protein belongs to the YbaB/EbfC family. As to quaternary structure, homodimer.

It is found in the cytoplasm. The protein localises to the nucleoid. Functionally, binds to DNA and alters its conformation. May be involved in regulation of gene expression, nucleoid organization and DNA protection. This chain is Nucleoid-associated protein NT01CX_0824, found in Clostridium novyi (strain NT).